We begin with the raw amino-acid sequence, 87 residues long: Small ribosomal subunit protein uS17 (87 aa).

This sequence belongs to the universal ribosomal protein uS17 family. Part of the 30S ribosomal subunit.

One of the primary rRNA binding proteins, it binds specifically to the 5'-end of 16S ribosomal RNA. In Cytophaga hutchinsonii (strain ATCC 33406 / DSM 1761 / CIP 103989 / NBRC 15051 / NCIMB 9469 / D465), this protein is Small ribosomal subunit protein uS17.